The chain runs to 458 residues: ATP synthase subunit beta (458 aa).

148-155 lines the ATP pocket; sequence GGAGVGKT.

The protein belongs to the ATPase alpha/beta chains family. As to quaternary structure, F-type ATPases have 2 components, CF(1) - the catalytic core - and CF(0) - the membrane proton channel. CF(1) has five subunits: alpha(3), beta(3), gamma(1), delta(1), epsilon(1). CF(0) has three main subunits: a(1), b(2) and c(9-12). The alpha and beta chains form an alternating ring which encloses part of the gamma chain. CF(1) is attached to CF(0) by a central stalk formed by the gamma and epsilon chains, while a peripheral stalk is formed by the delta and b chains.

The protein resides in the cell inner membrane. The enzyme catalyses ATP + H2O + 4 H(+)(in) = ADP + phosphate + 5 H(+)(out). Functionally, produces ATP from ADP in the presence of a proton gradient across the membrane. The catalytic sites are hosted primarily by the beta subunits. The sequence is that of ATP synthase subunit beta from Pseudomonas putida (strain GB-1).